We begin with the raw amino-acid sequence, 218 residues long: 23 kDa integral membrane protein (218 aa).

Residues 1–12 are Cytoplasmic-facing; the sequence is MATLGTGMRCLK. A helical transmembrane segment spans residues 13–36; it reads SCVFILNIICLLCSLVLIGAGAYV. Over 37–55 the chain is Extracellular; sequence EVKFSQYEANLHKVWQAAP. The helical transmembrane segment at 56-71 threads the bilayer; sequence IAIIVVGVVILIVSFL. Residues 72 to 82 lie on the Cytoplasmic side of the membrane; the sequence is GCCGAIKENVC. A helical transmembrane segment spans residues 83–108; the sequence is MLYMYAFFLIVLLIAELVAAIVAVVY. Residues 109–183 lie on the Extracellular side of the membrane; it reads KDKIDDEINT…SVFSAFLKRN (75 aa). Residues 184-205 form a helical membrane-spanning segment; sequence LIIVACVAFGVCFFQLLSIVIA. The Cytoplasmic portion of the chain corresponds to 206-218; it reads CCLGQRIHDYQNV.

It belongs to the tetraspanin (TM4SF) family.

It localises to the membrane. The chain is 23 kDa integral membrane protein from Schistosoma japonicum (Blood fluke).